The following is a 532-amino-acid chain: Putative 57 kDa heat shock protein (532 aa).

2 consecutive sHSP domains span residues 25–134 and 439–532; these read VNGP…CKIT and SVLE…IPSN.

The protein belongs to the small heat shock protein (HSP20) family.

This Arabidopsis thaliana (Mouse-ear cress) protein is Putative 57 kDa heat shock protein.